Reading from the N-terminus, the 588-residue chain is Glutathione/L-cysteine transport system ATP-binding/permease protein CydD (588 aa).

Over 1–15 the chain is Cytoplasmic; the sequence is MNKSRQKELTRWLKQ. 2 helical membrane passes run 16 to 36 and 37 to 57; these read QSVISQRWLNISRLLGFVSGI and LIIAQAWFMARILQHMIMENI. Positions 20–306 constitute an ABC transmembrane type-1 domain; sequence SQRWLNISRL…APEFFQPLRD (287 aa). Topologically, residues 58-136 are cytoplasmic; the sequence is PREALLLPFT…LEQIDDMHDY (79 aa). Residues 137–157 form a helical membrane-spanning segment; it reads YARYLPQMALAVSVPLLIVVA. The Periplasmic portion of the chain corresponds to 158 to 161; it reads IFPS. A helical transmembrane segment spans residues 162–182; sequence NWAAALILLGTAPLIPLFMAL. Residues 183–249 lie on the Cytoplasmic side of the membrane; the sequence is VGMGAADANR…MEVLRLAFLS (67 aa). Residues 250–270 traverse the membrane as a helical segment; it reads SGILEFFTSLSIALVAVYFGF. The Periplasmic portion of the chain corresponds to 271 to 276; sequence SYLGEL. A helical membrane pass occupies residues 277–297; sequence DFGHYDTGVTLAAGFLALILA. Topologically, residues 298-573 are cytoplasmic; it reads PEFFQPLRDL…QGRYAELSVA (276 aa). Residues 339–572 form the ABC transporter domain; the sequence is EAELASTDPV…EQGRYAELSV (234 aa). 373 to 380 is an ATP binding site; that stretch reads LPAGQRAV.

This sequence belongs to the ABC transporter superfamily. Cysteine exporter (TC 3.A.1.129.1) family. As to quaternary structure, forms a heterodimer with CydC.

It localises to the cell inner membrane. The catalysed reaction is L-cysteine(in) + ATP + H2O = L-cysteine(out) + ADP + phosphate + H(+). It carries out the reaction glutathione(in) + ATP + H2O = glutathione(out) + ADP + phosphate + H(+). With respect to regulation, ATPase activity is stimulated by various thiol compounds. The presence of heme leads to a further enhancement of thiol-stimulated ATPase activity, although a large excess of heme inhibits activity. Glutathione transport is inhibited by sodium orthovanadate, an inhibitor of ABC-type transport systems, but not by the proton ionophore carbonyl cyanide m-chlorophenylhydrazone (CCCP). In terms of biological role, part of the ABC transporter complex CydDC that exports the reduced low-molecular-weight thiols cysteine and glutathione to the periplasm. Export of these thiol-containing redox-active molecules may be crucial for redox homeostasis in the periplasm, permitting correct assembly of various respiratory complexes and formation of correct disulfide bonds in periplasmic and secreted proteins. CydD contains transmembrane domains (TMD), which form a pore in the inner membrane, and an ATP-binding domain (NBD), which is responsible for energy generation. Required for the assembly of functional cytochrome bd-type quinol oxidases and periplasmic c-type cytochromes. Overexpression of CydDC under anaerobic conditions also results in the formation of a heme biosynthesis-derived pigment, P-574. CydDC binds heme b, but heme is probably not transported by the complex and instead has a role in regulating ATPase activity. Conversely, a more recent study suggests an alternative function of CydDC: authors suggest that CydDC does not mediate the export of L-cysteine but rather reduces cytoplasmic L-cystine to L-cysteine. The principle function of CydDC would be to maintain the reduced state of cytoplasmic L-cysteine, thereby providing an important connection between sulfur metabolism, oxidative stress and resistance to antibiotics. In Escherichia coli (strain K12), this protein is Glutathione/L-cysteine transport system ATP-binding/permease protein CydD.